The chain runs to 702 residues: Polyribonucleotide nucleotidyltransferase (702 aa).

Positions 485 and 491 each coordinate Mg(2+). In terms of domain architecture, KH spans 552–612 (PRTEIICIDP…EGVKKAISII (61 aa)). One can recognise an S1 motif domain in the interval 622–690 (GEIYLGKVTK…NQGRINLSRK (69 aa)).

It belongs to the polyribonucleotide nucleotidyltransferase family. The cofactor is Mg(2+).

Its subcellular location is the cytoplasm. The catalysed reaction is RNA(n+1) + phosphate = RNA(n) + a ribonucleoside 5'-diphosphate. Functionally, involved in mRNA degradation. Catalyzes the phosphorolysis of single-stranded polyribonucleotides processively in the 3'- to 5'-direction. The chain is Polyribonucleotide nucleotidyltransferase from Clostridium botulinum (strain ATCC 19397 / Type A).